The following is a 211-amino-acid chain: WUSCHEL-related homeobox 14 (211 aa).

The segment at residues 91 to 155 (STRHRWTPTS…NRRARSKRKQ (65 aa)) is a DNA-binding region (homeobox; WUS-type). Positions 147 to 183 (RRARSKRKQPQTTTANGQADDVAVTTEERRSCGDSGG) are disordered.

It belongs to the WUS homeobox family. As to expression, expressed in root vasculature, pericycle and stamen. Expressed in the procambium during stem maturation.

It is found in the nucleus. In terms of biological role, acts redundantly with WOX4 downstream of the TDR/PXY receptor kinase to regulate procambial cell proliferation and differentiation in vascular tissue, independently of any role in vascular. Involved in the regulation of gibberellin (GA) biosynthesis pathway. Positively regulates the expression of the GA biosynthesis gene GA3OX1, and negatively regulates the expression of GA2OX1 during secondary growth, which increases bioactive GA content in the inflorescence stem. Promotes vascular cell differentiation in the inflorescence stem. Functionally, transcription factor which may be involved in developmental processes. This chain is WUSCHEL-related homeobox 14 (WOX14), found in Arabidopsis thaliana (Mouse-ear cress).